A 674-amino-acid polypeptide reads, in one-letter code: Inorganic pyrophosphatase TTM2 (674 aa).

Residues 248–410 (SPTYILKSRK…PRTYIEQIQL (163 aa)) form the CYTH domain. Disordered stretches follow at residues 457–498 (KNLK…SPAN) and 619–640 (RSRL…SKSS). Residues 484–496 (SDRRYEERNHDSP) show a composition bias toward basic and acidic residues. Residues 623-640 (ARTGSSNSGNRGRSSKSS) are compositionally biased toward low complexity. A helical membrane pass occupies residues 650-670 (LPLVLTVAICSIGIIVIKSYI).

Mg(2+) is required as a cofactor. As to expression, predominantly expressed in the shoot apices of inflorescences.

Its subcellular location is the mitochondrion outer membrane. The enzyme catalyses diphosphate + H2O = 2 phosphate + H(+). Its function is as follows. Exhibits pyrophosphatase activity with stronger affinity for pyrophosphate (PPi), moderate affinity for ATP and ADP, and weak affinity for tripolyphosphate (PPPi). No activity observed toward uridine substrate. Negative regulator of the salicylic acid (SA)-mediated amplification of defense responses against both virulent and avirulent pathogens, including oomycetes (e.g. H.arabidopsidis) and bacteria (e.g. P.syringae). Represses systemic acquired resistance (SAR). The sequence is that of Inorganic pyrophosphatase TTM2 from Arabidopsis thaliana (Mouse-ear cress).